Reading from the N-terminus, the 238-residue chain is Sugar fermentation stimulation protein homolog (238 aa).

Belongs to the SfsA family.

The protein is Sugar fermentation stimulation protein homolog of Alkalilimnicola ehrlichii (strain ATCC BAA-1101 / DSM 17681 / MLHE-1).